A 562-amino-acid polypeptide reads, in one-letter code: NAD-dependent malic enzyme (562 aa).

Tyr-101 acts as the Proton donor in catalysis. An NAD(+)-binding site is contributed by Arg-154. The Proton acceptor role is filled by Lys-172. A divalent metal cation is bound by residues Glu-243, Asp-244, and Asp-267. Asp-267 and Asn-415 together coordinate NAD(+).

The protein belongs to the malic enzymes family. Homotetramer. The cofactor is Mg(2+). It depends on Mn(2+) as a cofactor.

It carries out the reaction (S)-malate + NAD(+) = pyruvate + CO2 + NADH. The catalysed reaction is oxaloacetate + H(+) = pyruvate + CO2. This Shewanella oneidensis (strain ATCC 700550 / JCM 31522 / CIP 106686 / LMG 19005 / NCIMB 14063 / MR-1) protein is NAD-dependent malic enzyme.